Here is a 344-residue protein sequence, read N- to C-terminus: Phenylalanine--tRNA ligase alpha subunit (344 aa).

E256 contacts Mg(2+).

This sequence belongs to the class-II aminoacyl-tRNA synthetase family. Phe-tRNA synthetase alpha subunit type 1 subfamily. In terms of assembly, tetramer of two alpha and two beta subunits. The cofactor is Mg(2+).

Its subcellular location is the cytoplasm. The catalysed reaction is tRNA(Phe) + L-phenylalanine + ATP = L-phenylalanyl-tRNA(Phe) + AMP + diphosphate + H(+). In Onion yellows phytoplasma (strain OY-M), this protein is Phenylalanine--tRNA ligase alpha subunit.